The primary structure comprises 122 residues: Immunoglobulin lambda variable 4-3 (122 aa).

Residues 1–19 (MAWVSFYLLPFIFSTGLCA) form the signal peptide. The tract at residues 20 to 44 (LPVLTQPPSASALLGASIKLTCTLS) is framework-1. The Ig-like domain maps to 21–122 (PVLTQPPSAS…ESHTIDGQVG (102 aa)). The cysteines at positions 41 and 111 are disulfide-linked. The interval 45 to 51 (SEHSTYT) is complementarity-determining-1. Residues 52 to 68 (IEWYQQRPGRSPQYIMK) are framework-2. Residues 69 to 75 (VKSDGSH) are complementarity-determining-2. The interval 76–111 (SKGDGIPDRFMGSSSGADRYLTFSNLQSDDEAEYHC) is framework-3. Positions 112-122 (GESHTIDGQVG) are complementarity-determining-3.

In terms of assembly, immunoglobulins are composed of two identical heavy chains and two identical light chains; disulfide-linked.

The protein resides in the secreted. The protein localises to the cell membrane. V region of the variable domain of immunoglobulin light chains that participates in the antigen recognition. Immunoglobulins, also known as antibodies, are membrane-bound or secreted glycoproteins produced by B lymphocytes. In the recognition phase of humoral immunity, the membrane-bound immunoglobulins serve as receptors which, upon binding of a specific antigen, trigger the clonal expansion and differentiation of B lymphocytes into immunoglobulins-secreting plasma cells. Secreted immunoglobulins mediate the effector phase of humoral immunity, which results in the elimination of bound antigens. The antigen binding site is formed by the variable domain of one heavy chain, together with that of its associated light chain. Thus, each immunoglobulin has two antigen binding sites with remarkable affinity for a particular antigen. The variable domains are assembled by a process called V-(D)-J rearrangement and can then be subjected to somatic hypermutations which, after exposure to antigen and selection, allow affinity maturation for a particular antigen. The chain is Immunoglobulin lambda variable 4-3 from Homo sapiens (Human).